We begin with the raw amino-acid sequence, 398 residues long: Unsaturated chondroitin disaccharide hydrolase (398 aa).

Catalysis depends on D115, which acts as the Nucleophile. Substrate-binding residues include D115, D175, G233, T235, R247, W251, S365, and S368. The Proton donor role is filled by D175.

Belongs to the glycosyl hydrolase 88 family. As to quaternary structure, monomer.

It carries out the reaction beta-D-4-deoxy-Delta(4)-GlcpA-(1-&gt;3)-beta-D-GalpNAc6S + H2O = N-acetyl-beta-D-galactosamine 6-sulfate + 5-dehydro-4-deoxy-D-glucuronate. Catalyzes the hydrolysis of unsaturated hyaluronate and chondroitin disaccharides. Also degrades unsaturated heparin disaccharides. Releases 4-deoxy-4,5-didehydro D-glucuronic acid or 4-deoxy-4,5-didehydro L-iduronic acid from chondroitin disaccharides, hyaluronan disaccharides and heparin disaccharides and cleaves both glycosidic (1-&gt;3) and (1-&gt;4) bonds. Prefers sulfated glycosaminoglycans compared to unsulfated glycosaminoglycans. Probably required for mammalian cells invasion through the degradation of extracellular sulfated glycosaminoglycans such as chondroitin and hyaluronan. The protein is Unsaturated chondroitin disaccharide hydrolase of Streptococcus agalactiae serotype III (strain NEM316).